The sequence spans 197 residues: EF-hand calcium-binding domain-containing protein 9 (197 aa).

2 residues coordinate Ca(2+): Asp58 and Asp69. 3 EF-hand domains span residues 59-94 (LKKA…LLAH), 100-135 (GQFM…FLFN), and 136-171 (IQKQ…YTDK). The Ca(2+) site is built by Asp149, Asp153, Arg155, and Glu160. Positions 177–188 (KTEEKEKGERKR) are enriched in basic and acidic residues. Residues 177–197 (KTEEKEKGERKRSLYSKCHIK) form a disordered region.

In terms of assembly, component of the CatSper complex or CatSpermasome composed of the core pore-forming members CATSPER1, CATSPER2, CATSPER3 and CATSPER4 as well as auxiliary members CATSPERB, CATSPERG, CATSPERD, CATSPERE, CATSPERZ, C2CD6/CATSPERT, TMEM249, TMEM262 and EFCAB9. HSPA1 may be an additional auxiliary complex member. The core complex members CATSPER1, CATSPER2, CATSPER3 and CATSPER4 form a heterotetrameric channel. The auxiliary CATSPERB, CATSPERG, CATSPERD and CATSPERE subunits form a pavilion-like structure over the pore which stabilizes the complex through interactions with CATSPER4, CATSPER3, CATSPER1 and CATSPER2 respectively. TMEM262/CATSPERH interacts with CATSPERB, further stabilizing the complex. C2CD6/CATSPERT interacts at least with CATSPERD and is required for targeting the CatSper complex in the flagellar membrane. Interacts with CATSPERZ; the interaction is direct, Ca(2+)-dependent and connects EFCAB9 with the CatSper complex. Dissociates from CATSPERZ at elevated pH.

It is found in the cytoplasm. The protein localises to the cell projection. Its subcellular location is the cilium. It localises to the flagellum. Functionally, auxiliary component of the CatSper complex, a complex involved in sperm cell hyperactivation. pH-dependent Ca(2+) sensor required to activate the CatSper channel. Sperm cell hyperactivation is needed for sperm motility which is essential late in the preparation of sperm for fertilization. Associates with the CatSper complex via direct interaction with CATSPERZ, and senses intracellular Ca(2+). Together with CATSPERZ, associates with the CatSper channel pore and is required for the two-row structure of each single CatSper channel. The protein is EF-hand calcium-binding domain-containing protein 9 of Homo sapiens (Human).